The following is a 305-amino-acid chain: Sulfate adenylyltransferase subunit 2 (305 aa).

Belongs to the PAPS reductase family. CysD subfamily. In terms of assembly, heterodimer composed of CysD, the smaller subunit, and CysN.

The enzyme catalyses sulfate + ATP + H(+) = adenosine 5'-phosphosulfate + diphosphate. Its pathway is sulfur metabolism; hydrogen sulfide biosynthesis; sulfite from sulfate: step 1/3. Functionally, with CysN forms the ATP sulfurylase (ATPS) that catalyzes the adenylation of sulfate producing adenosine 5'-phosphosulfate (APS) and diphosphate, the first enzymatic step in sulfur assimilation pathway. APS synthesis involves the formation of a high-energy phosphoric-sulfuric acid anhydride bond driven by GTP hydrolysis by CysN coupled to ATP hydrolysis by CysD. The protein is Sulfate adenylyltransferase subunit 2 of Pseudomonas fluorescens (strain Pf0-1).